A 479-amino-acid polypeptide reads, in one-letter code: Acyltransferase easC (479 aa).

Catalysis depends on His-161, which acts as the Proton acceptor.

Belongs to the plant acyltransferase family. In terms of assembly, monomer.

Its pathway is antibiotic biosynthesis. Acyltransferase; part of the gene cluster that mediates the biosynthesis of emericellamides, secondary metabolites acting as antibiotics. The biosynthesis of emericellamides initiates from the highly reducing polyketide synthase easB which catalyzes the formation of the linear polyketide chain. EasB produces several polyketides that can be further processed by the downstream enzymes. The polyketides are released from easB as linear polyketide carboxylic acids, which are converted to CoA thioesters by the acyl-CoA ligase easD. The substrates are then loaded onto the acyltransferase easC, which shuttles them to the first thiolation (T) domain of the nonribosomal peptide synthetase easA. EasA then performs condensation of the polyketides with one glycine, two alanine, one valine and one leucine residues. A last step of cyclization leads to the production of emericellamides. The sequence is that of Acyltransferase easC from Emericella nidulans (strain FGSC A4 / ATCC 38163 / CBS 112.46 / NRRL 194 / M139) (Aspergillus nidulans).